A 156-amino-acid chain; its full sequence is Small ribosomal subunit protein uS7 (156 aa).

Belongs to the universal ribosomal protein uS7 family. As to quaternary structure, part of the 30S ribosomal subunit. Contacts proteins S9 and S11.

In terms of biological role, one of the primary rRNA binding proteins, it binds directly to 16S rRNA where it nucleates assembly of the head domain of the 30S subunit. Is located at the subunit interface close to the decoding center, probably blocks exit of the E-site tRNA. The polypeptide is Small ribosomal subunit protein uS7 (Shewanella denitrificans (strain OS217 / ATCC BAA-1090 / DSM 15013)).